A 741-amino-acid chain; its full sequence is Exostosin-1b (741 aa).

The Cytoplasmic segment spans residues 1–7 (MQAKKRY). A helical; Signal-anchor for type II membrane protein transmembrane segment spans residues 8 to 28 (LISLLTGAFLVLLIYLGGGGV). Topologically, residues 29–741 (PGPAAPGSRS…RKKYREIERL (713 aa)) are lumenal. 2 N-linked (GlcNAc...) asparagine glycosylation sites follow: asparagine 84 and asparagine 325. Positions 435, 544, 560, 561, 562, 648, 649, and 696 each coordinate UDP-N-acetyl-alpha-D-glucosamine. Aspartate 562 serves as a coordination point for Mn(2+). Cysteine 647 and cysteine 699 are joined by a disulfide. Residue aspartate 649 is part of the active site.

The protein belongs to the glycosyltransferase 47 family. The cofactor is Mn(2+).

The protein localises to the endoplasmic reticulum membrane. The enzyme catalyses 3-O-{[(1-&gt;4)-beta-D-GlcA-(1-&gt;4)-alpha-D-GlcNAc](n)-(1-&gt;4)-beta-D-GlcA-(1-&gt;3)-beta-D-Gal-(1-&gt;3)-beta-D-Gal-(1-&gt;4)-beta-D-Xyl}-L-seryl-[protein] + UDP-N-acetyl-alpha-D-glucosamine = 3-O-{alpha-D-GlcNAc-[(1-&gt;4)-beta-D-GlcA-(1-&gt;4)-alpha-D-GlcNAc](n)-(1-&gt;4)-beta-D-GlcA-(1-&gt;3)-beta-D-Gal-(1-&gt;3)-beta-D-Gal-(1-&gt;4)-beta-D-Xyl}-L-seryl-[protein] + UDP + H(+). It catalyses the reaction 3-O-{alpha-D-GlcNAc-[(1-&gt;4)-beta-D-GlcA-(1-&gt;4)-alpha-D-GlcNAc](n)-(1-&gt;4)-beta-D-GlcA-(1-&gt;3)-beta-D-Gal-(1-&gt;3)-beta-D-Gal-(1-&gt;4)-beta-D-Xyl}-L-seryl-[protein] + UDP-alpha-D-glucuronate = 3-O-{[(1-&gt;4)-beta-D-GlcA-(1-&gt;4)-alpha-D-GlcNAc](n+1)-(1-&gt;4)-beta-D-GlcA-(1-&gt;3)-beta-D-Gal-(1-&gt;3)-beta-D-Gal-(1-&gt;4)-beta-D-Xyl}-L-seryl-[protein] + UDP + H(+). The protein operates within protein modification; protein glycosylation. Its function is as follows. Glycosyltransferase required for the biosynthesis of heparan-sulfate. In Danio rerio (Zebrafish), this protein is Exostosin-1b (ext1b).